The sequence spans 689 residues: Glycine--tRNA ligase beta subunit (689 aa).

The protein belongs to the class-II aminoacyl-tRNA synthetase family. As to quaternary structure, tetramer of two alpha and two beta subunits.

The protein localises to the cytoplasm. The catalysed reaction is tRNA(Gly) + glycine + ATP = glycyl-tRNA(Gly) + AMP + diphosphate. This Pectobacterium carotovorum subsp. carotovorum (strain PC1) protein is Glycine--tRNA ligase beta subunit.